Reading from the N-terminus, the 552-residue chain is Ferry endosomal RAB5 effector complex subunit 3 (552 aa).

Positions 383–403 (LKESLDSGNQNGGNDDKTKNA) are disordered.

In terms of assembly, component of the FERRY complex composed of five subunits, TBCK, PPP1R21, FERRY3, CRYZL1 and GATD1 with a ratio of 1:2:1:2:4, respectively.

Its subcellular location is the cytoplasm. The protein resides in the early endosome. Its function is as follows. Component of the FERRY complex (Five-subunit Endosomal Rab5 and RNA/ribosome intermediary). The FERRY complex directly interacts with mRNAs and RAB5A, and functions as a RAB5A effector involved in the localization and the distribution of specific mRNAs most likely by mediating their endosomal transport. The complex recruits mRNAs and ribosomes to early endosomes through direct mRNA-interaction. Plays a role in mast cell degranulation. The protein is Ferry endosomal RAB5 effector complex subunit 3 of Homo sapiens (Human).